The chain runs to 691 residues: DNA ligase (691 aa).

NAD(+) is bound by residues 41-45, 90-91, and Glu130; these read DAEYD and SL. The active-site N6-AMP-lysine intermediate is Lys132. NAD(+) is bound by residues Arg153, Glu190, Lys307, and Lys331. The Zn(2+) site is built by Cys425, Cys428, Cys443, and Cys449. One can recognise a BRCT domain in the interval 610 to 691; it reads APQGVLAGKT…LHQLLEGNTP (82 aa).

Belongs to the NAD-dependent DNA ligase family. LigA subfamily. It depends on Mg(2+) as a cofactor. Mn(2+) serves as cofactor.

It catalyses the reaction NAD(+) + (deoxyribonucleotide)n-3'-hydroxyl + 5'-phospho-(deoxyribonucleotide)m = (deoxyribonucleotide)n+m + AMP + beta-nicotinamide D-nucleotide.. DNA ligase that catalyzes the formation of phosphodiester linkages between 5'-phosphoryl and 3'-hydroxyl groups in double-stranded DNA using NAD as a coenzyme and as the energy source for the reaction. It is essential for DNA replication and repair of damaged DNA. In Burkholderia cenocepacia (strain ATCC BAA-245 / DSM 16553 / LMG 16656 / NCTC 13227 / J2315 / CF5610) (Burkholderia cepacia (strain J2315)), this protein is DNA ligase.